The chain runs to 147 residues: Phosphoribosyl-AMP cyclohydrolase (147 aa).

D97 serves as a coordination point for Mg(2+). C98 serves as a coordination point for Zn(2+). Mg(2+)-binding residues include D99 and D101. 2 residues coordinate Zn(2+): C114 and C121.

It belongs to the PRA-CH family. In terms of assembly, homodimer. Requires Mg(2+) as cofactor. The cofactor is Zn(2+).

The protein resides in the cytoplasm. The catalysed reaction is 1-(5-phospho-beta-D-ribosyl)-5'-AMP + H2O = 1-(5-phospho-beta-D-ribosyl)-5-[(5-phospho-beta-D-ribosylamino)methylideneamino]imidazole-4-carboxamide. The protein operates within amino-acid biosynthesis; L-histidine biosynthesis; L-histidine from 5-phospho-alpha-D-ribose 1-diphosphate: step 3/9. Catalyzes the hydrolysis of the adenine ring of phosphoribosyl-AMP. This is Phosphoribosyl-AMP cyclohydrolase from Hydrogenovibrio crunogenus (strain DSM 25203 / XCL-2) (Thiomicrospira crunogena).